Reading from the N-terminus, the 177-residue chain is uncharacterized protein (177 aa).

This is an uncharacterized protein from Schizosaccharomyces pombe (strain 972 / ATCC 24843) (Fission yeast).